Here is a 229-residue protein sequence, read N- to C-terminus: Large ribosomal subunit protein uL1 (229 aa).

This sequence belongs to the universal ribosomal protein uL1 family. Part of the 50S ribosomal subunit.

Binds directly to 23S rRNA. The L1 stalk is quite mobile in the ribosome, and is involved in E site tRNA release. In terms of biological role, protein L1 is also a translational repressor protein, it controls the translation of the L11 operon by binding to its mRNA. The protein is Large ribosomal subunit protein uL1 of Pediococcus pentosaceus (strain ATCC 25745 / CCUG 21536 / LMG 10740 / 183-1w).